Reading from the N-terminus, the 545-residue chain is Protein BTN1 (545 aa).

Residues Ala23–Thr49 are disordered. The segment covering Met34–Thr49 has biased composition (polar residues). The next 5 helical transmembrane spans lie at Ala66–Leu86, Leu97–Leu117, Val127–Leu147, Val205–Val225, and Gly234–Pro254. The segment at Thr276 to Ile304 is disordered. 3 helical membrane passes run Met322 to Met342, Leu408 to Leu428, and Leu440 to Phe460.

Belongs to the battenin family.

Its subcellular location is the vacuole membrane. Involved in vacuolar transport and vacuole pH homeostasis. Also required for cytokinesis. The protein is Protein BTN1 (BTN1) of Mycosarcoma maydis (Corn smut fungus).